A 403-amino-acid polypeptide reads, in one-letter code: MTESTFPQYPRLVLSKGREKSLLRRHPWVFSGAVSRLEGKANLGETIDIVDHQGKWLARGAWSPASQIRARVWTFDKAESIDIAFFTRRLRQAQQWRDWLAKKDGLDSYRLIAGESDGLPGVTIDRFGHFLVLQLLSAGAEYQRAALISALQTCDPDCAIYDRSDVAVRKKEGMALTQGPVTGELPPALLPIEEHGMKLLVDIQGGHKTGYYLDQRDSRLATRRYVENQRVLNCFSYTGGFAVSALMGGCRQVVSVDTSQDALDIARQNVELNQLDLSKAEFVRDDVFKLLRAYREHGEKFDVIIMDPPKFVENKSQLMGACRGYKDINMLAIQLLNPGGILLTFSCSGLMTSDLFQKIIADAAIDAGRDVQFIEQFRQAADHPVIATYPEGLYLKGFACRVM.

Residues 9-88 (YPRLVLSKGR…ESIDIAFFTR (80 aa)) enclose the PUA domain.

It belongs to the methyltransferase superfamily. RlmI family.

It localises to the cytoplasm. It catalyses the reaction cytidine(1962) in 23S rRNA + S-adenosyl-L-methionine = 5-methylcytidine(1962) in 23S rRNA + S-adenosyl-L-homocysteine + H(+). Specifically methylates the cytosine at position 1962 (m5C1962) of 23S rRNA. The protein is Ribosomal RNA large subunit methyltransferase I of Salmonella enteritidis PT4 (strain P125109).